Reading from the N-terminus, the 259-residue chain is GDP-perosamine N-formyltransferase (259 aa).

(6S)-5,6,7,8-tetrahydrofolate contacts are provided by residues 89-91 (SLI) and 139-143 (DENFD).

The protein belongs to the Fmt family. Homodimer.

It catalyses the reaction GDP-alpha-D-perosamine + (6R)-10-formyltetrahydrofolate = GDP-N-formyl-alpha-D-perosamine + (6S)-5,6,7,8-tetrahydrofolate + H(+). Its pathway is bacterial outer membrane biogenesis; lipopolysaccharide biosynthesis. Its function is as follows. Involved in the lipopolysaccharide (LPS) O-antigen biosynthesis. Catalyzes the transfer of a formyl group to GDP-perosamine, leading to the formation of GDP-N-formylperosamine. Is critical for full bacterial virulence. This Brucella abortus (strain 2308) protein is GDP-perosamine N-formyltransferase.